A 246-amino-acid chain; its full sequence is 3-deoxy-manno-octulosonate cytidylyltransferase (246 aa).

Belongs to the KdsB family.

It is found in the cytoplasm. It catalyses the reaction 3-deoxy-alpha-D-manno-oct-2-ulosonate + CTP = CMP-3-deoxy-beta-D-manno-octulosonate + diphosphate. The protein operates within nucleotide-sugar biosynthesis; CMP-3-deoxy-D-manno-octulosonate biosynthesis; CMP-3-deoxy-D-manno-octulosonate from 3-deoxy-D-manno-octulosonate and CTP: step 1/1. It participates in bacterial outer membrane biogenesis; lipopolysaccharide biosynthesis. Its function is as follows. Activates KDO (a required 8-carbon sugar) for incorporation into bacterial lipopolysaccharide in Gram-negative bacteria. This is 3-deoxy-manno-octulosonate cytidylyltransferase from Paramagnetospirillum magneticum (strain ATCC 700264 / AMB-1) (Magnetospirillum magneticum).